The chain runs to 128 residues: Sulfurtransferase TusD (128 aa).

C78 (cysteine persulfide intermediate) is an active-site residue.

This sequence belongs to the DsrE/TusD family. In terms of assembly, heterohexamer, formed by a dimer of trimers. The hexameric TusBCD complex contains 2 copies each of TusB, TusC and TusD. The TusBCD complex interacts with TusE.

It is found in the cytoplasm. Part of a sulfur-relay system required for 2-thiolation of 5-methylaminomethyl-2-thiouridine (mnm(5)s(2)U) at tRNA wobble positions. Accepts sulfur from TusA and transfers it in turn to TusE. The chain is Sulfurtransferase TusD from Escherichia coli O127:H6 (strain E2348/69 / EPEC).